The chain runs to 519 residues: Major facilitator superfamily domain-containing protein 8 (519 aa).

The interval 1 to 25 (MANLGSEAEREPLLGPGSPGSREWS) is disordered. The Cytoplasmic portion of the chain corresponds to 1–41 (MANLGSEAEREPLLGPGSPGSREWSEIETQEHYKSRWKSVR). Residues 13-14 (LL) carry the Dileucine internalization motif motif. Residues 42-62 (ILYLTMFLSSVGFSIVIMSIW) traverse the membrane as a helical segment. Over 63 to 75 (PYLQKIDQTADAS) the chain is Extracellular. Residues 76–96 (FLGWVIASYSLGQMVASPLFG) traverse the membrane as a helical segment. Residues 97–106 (LWSNYRPRKE) lie on the Cytoplasmic side of the membrane. A helical transmembrane segment spans residues 107-127 (PLIVSISISVAANCLYAYVHV). Topologically, residues 128–140 (PAAHNKYYMLIAR) are extracellular. Residues 141-161 (GLVGFGAGNVAVVRSYIAGAT) form a helical membrane-spanning segment. Residues 162-174 (SLQERTNAMANTS) are Cytoplasmic-facing. A helical membrane pass occupies residues 175–195 (TCQALGFILGPVFQTCFALIG). Residues 196–212 (EKGVTWDIIKLQVNMYT) lie on the Extracellular side of the membrane. The chain crosses the membrane as a helical span at residues 213 to 233 (APVLLAAFLGILNIILILFIL). The Cytoplasmic segment spans residues 234-267 (REHRVDDLGRQCKSVNFQEENTDEPQIPEGSIDQ). A helical membrane pass occupies residues 268-288 (VAVVATNIVFFVVLFIFAVYE). Over 289 to 310 (TILTPLTLDMYAWTQEQAVLYD) the chain is Extracellular. A helical transmembrane segment spans residues 311–331 (GILLVAFGVEAVLVFMGVKLL). At 332-338 (SKKIGER) the chain is on the cytoplasmic side. Residues 339–359 (AILLGGFVVVWVGFFILLPWG) form a helical membrane-spanning segment. Residues 360 to 416 (NQFPKIQWEDLHNSSTPNTTFGEIIIGLWNSSREDHSEQPTGCPIEQTWCLYTPVIH) lie on the Extracellular side of the membrane. 2 N-linked (GlcNAc...) asparagine glycosylation sites follow: N372 and N377. Residues 417-439 (LAQFLTAAVLIGTGYPACSVMSY) form a helical membrane-spanning segment. At 440–452 (TLYSKVLGPKPQG) the chain is on the cytoplasmic side. The chain crosses the membrane as a helical span at residues 453-473 (IYMGWLTTSGSAARILGPVFI). Over 474-483 (SHVYTYLGPR) the chain is Extracellular. Residues 484-504 (WAFSLVCGIVVLTILLIGAVY) traverse the membrane as a helical segment. Residues 505–519 (KRLVAFSVRYMRIQE) are Cytoplasmic-facing.

Belongs to the major facilitator superfamily.

It is found in the endosome membrane. The protein resides in the lysosome membrane. It catalyses the reaction chloride(in) = chloride(out). The enzyme catalyses iodide(out) = iodide(in). It carries out the reaction fluoride(in) = fluoride(out). In terms of biological role, outward-rectifying chloride channel involved in endolysosomal chloride homeostasis, membrane fusion and function. Conducts chloride currents up to hundreds of picoamperes. Regulates lysosomal calcium content by reducing the lysosomal membrane potential, thereby activating TRPML1 channel and further release of lysosomal calcium ions. Regulates the pH in endolysosomal compartments and may contribute to progressive acidification from endosome to lysosome. Permeable to other halides such as iodide and fluoride ions. In Mus musculus (Mouse), this protein is Major facilitator superfamily domain-containing protein 8.